Consider the following 39-residue polypeptide: Sarcotoxin-1C (39 aa).

An Arginine amide modification is found at Arg39.

The protein belongs to the cecropin family.

It localises to the secreted. In terms of biological role, sarcotoxins, which are potent bactericidal proteins, are produced in response to injury. They are cytotoxic to both Gram-positive and Gram-negative bacteria. This is Sarcotoxin-1C from Sarcophaga peregrina (Flesh fly).